The following is a 689-amino-acid chain: DNA ligase (689 aa).

NAD(+) contacts are provided by residues 40–44, 89–90, and Glu121; these read DSEYD and SL. Lys123 serves as the catalytic N6-AMP-lysine intermediate. NAD(+)-binding residues include Arg144, Glu179, Lys295, and Lys319. The Zn(2+) site is built by Cys413, Cys416, Cys431, and Cys437. Positions 610 to 689 constitute a BRCT domain; it reads REQSSLTDKI…EEWLTLIKNV (80 aa).

It belongs to the NAD-dependent DNA ligase family. LigA subfamily. Mg(2+) is required as a cofactor. Requires Mn(2+) as cofactor.

It carries out the reaction NAD(+) + (deoxyribonucleotide)n-3'-hydroxyl + 5'-phospho-(deoxyribonucleotide)m = (deoxyribonucleotide)n+m + AMP + beta-nicotinamide D-nucleotide.. Its function is as follows. DNA ligase that catalyzes the formation of phosphodiester linkages between 5'-phosphoryl and 3'-hydroxyl groups in double-stranded DNA using NAD as a coenzyme and as the energy source for the reaction. It is essential for DNA replication and repair of damaged DNA. This chain is DNA ligase, found in Rickettsia africae (strain ESF-5).